We begin with the raw amino-acid sequence, 355 residues long: S-adenosylmethionine:tRNA ribosyltransferase-isomerase (355 aa).

It belongs to the QueA family. In terms of assembly, monomer.

The protein resides in the cytoplasm. The catalysed reaction is 7-aminomethyl-7-carbaguanosine(34) in tRNA + S-adenosyl-L-methionine = epoxyqueuosine(34) in tRNA + adenine + L-methionine + 2 H(+). Its pathway is tRNA modification; tRNA-queuosine biosynthesis. In terms of biological role, transfers and isomerizes the ribose moiety from AdoMet to the 7-aminomethyl group of 7-deazaguanine (preQ1-tRNA) to give epoxyqueuosine (oQ-tRNA). This is S-adenosylmethionine:tRNA ribosyltransferase-isomerase from Pectobacterium atrosepticum (strain SCRI 1043 / ATCC BAA-672) (Erwinia carotovora subsp. atroseptica).